A 434-amino-acid polypeptide reads, in one-letter code: Serine hydroxymethyltransferase (434 aa).

(6S)-5,6,7,8-tetrahydrofolate contacts are provided by residues Leu-131 and 135–137 (GHL). Lys-240 carries the N6-(pyridoxal phosphate)lysine modification.

The protein belongs to the SHMT family. In terms of assembly, homodimer. It depends on pyridoxal 5'-phosphate as a cofactor.

Its subcellular location is the cytoplasm. It catalyses the reaction (6R)-5,10-methylene-5,6,7,8-tetrahydrofolate + glycine + H2O = (6S)-5,6,7,8-tetrahydrofolate + L-serine. It functions in the pathway one-carbon metabolism; tetrahydrofolate interconversion. The protein operates within amino-acid biosynthesis; glycine biosynthesis; glycine from L-serine: step 1/1. Its function is as follows. Catalyzes the reversible interconversion of serine and glycine with tetrahydrofolate (THF) serving as the one-carbon carrier. This reaction serves as the major source of one-carbon groups required for the biosynthesis of purines, thymidylate, methionine, and other important biomolecules. Also exhibits THF-independent aldolase activity toward beta-hydroxyamino acids, producing glycine and aldehydes, via a retro-aldol mechanism. In Gluconobacter oxydans (strain 621H) (Gluconobacter suboxydans), this protein is Serine hydroxymethyltransferase.